We begin with the raw amino-acid sequence, 926 residues long: UvrABC system protein A (926 aa).

Glycine 31–serine 38 contributes to the ATP binding site. Residues cysteine 251 to cysteine 278 form a C4-type zinc finger. 2 consecutive ABC transporter domains span residues serine 308–leucine 568 and proline 588–arginine 916. Glycine 620–serine 627 serves as a coordination point for ATP. A C4-type zinc finger spans residues cysteine 719–cysteine 745.

It belongs to the ABC transporter superfamily. UvrA family. Forms a heterotetramer with UvrB during the search for lesions.

It localises to the cytoplasm. Its function is as follows. The UvrABC repair system catalyzes the recognition and processing of DNA lesions. UvrA is an ATPase and a DNA-binding protein. A damage recognition complex composed of 2 UvrA and 2 UvrB subunits scans DNA for abnormalities. When the presence of a lesion has been verified by UvrB, the UvrA molecules dissociate. The sequence is that of UvrABC system protein A from Aquifex aeolicus (strain VF5).